A 223-amino-acid polypeptide reads, in one-letter code: Membrane-associated progesterone receptor component 2 (223 aa).

A disordered region spans residues 1 to 33 (MAAGDGDVKLGTLGSGSESSNDGGSESPGDAGA). An O-linked (Xyl...) (chondroitin sulfate) serine glycan is attached at serine 15. The segment covering 15–33 (SGSESSNDGGSESPGDAGA) has biased composition (low complexity). A helical transmembrane segment spans residues 42-66 (AAALALLTGGGEMLLNVALVALVLL). 3 positions are modified to phosphoserine: serine 90, serine 104, and serine 208. In terms of domain architecture, Cytochrome b5 heme-binding spans 102–201 (DFSLEQLRQY…EKYDYVGRLL (100 aa)). Positions 202–223 (KPGEEPSEYTDEEDTKDHNKQD) are disordered. The span at 206 to 215 (EPSEYTDEED) shows a compositional bias: acidic residues. The residue at position 210 (tyrosine 210) is a Phosphotyrosine. Threonine 211 is modified (phosphothreonine).

This sequence belongs to the cytochrome b5 family. MAPR subfamily. Interacts with PGRMC1. Interacts with AAAS. Expressed by endometrial glands and stroma (at protein level). Detected in urine (at protein level).

It is found in the membrane. The protein localises to the nucleus envelope. It localises to the endoplasmic reticulum. Its subcellular location is the secreted. Required for the maintenance of uterine histoarchitecture and normal female reproductive lifespan. May serve as a universal non-classical progesterone receptor in the uterus. Intracellular heme chaperone required for delivery of labile, or signaling heme, to the nucleus. Plays a role in adipocyte function and systemic glucose homeostasis. In brown fat, which has a high demand for heme, delivery of labile heme in the nucleus regulates the activity of heme-responsive transcriptional repressors such as NR1D1 and BACH1. This Homo sapiens (Human) protein is Membrane-associated progesterone receptor component 2.